We begin with the raw amino-acid sequence, 180 residues long: MKILRIIQGVGTQLRSLSMVFSHAWHPRETLNYPEEAVYAAPRYRGRIVLTRDPDGDERCVACNLCAVACPVGCISLQKSERDDGRWYPEFFRINFSRCIFCGLCEEACPTTAIQLTPDFEMGEYRRQDLVYEKEDLLISGPGKYPDYNFYRMSGMAIDGKPKGDAENEAKPIDVKSLLP.

2 4Fe-4S ferredoxin-type domains span residues 48–80 (IVLTRDPDGDERCVACNLCAVACPVGCISLQKS) and 90–119 (EFFRINFSRCIFCGLCEEACPTTAIQLTPD). [4Fe-4S] cluster-binding residues include cysteine 60, cysteine 63, cysteine 66, cysteine 70, cysteine 99, cysteine 102, cysteine 105, and cysteine 109. Over residues 161–174 (KPKGDAENEAKPID) the composition is skewed to basic and acidic residues. The disordered stretch occupies residues 161–180 (KPKGDAENEAKPIDVKSLLP).

Belongs to the complex I 23 kDa subunit family. NDH-1 is composed of 13 different subunits. Subunits NuoA, H, J, K, L, M, N constitute the membrane sector of the complex. It depends on [4Fe-4S] cluster as a cofactor.

It is found in the cell inner membrane. It carries out the reaction a quinone + NADH + 5 H(+)(in) = a quinol + NAD(+) + 4 H(+)(out). NDH-1 shuttles electrons from NADH, via FMN and iron-sulfur (Fe-S) centers, to quinones in the respiratory chain. The immediate electron acceptor for the enzyme in this species is believed to be ubiquinone. Couples the redox reaction to proton translocation (for every two electrons transferred, four hydrogen ions are translocated across the cytoplasmic membrane), and thus conserves the redox energy in a proton gradient. The polypeptide is NADH-quinone oxidoreductase subunit I (Shewanella oneidensis (strain ATCC 700550 / JCM 31522 / CIP 106686 / LMG 19005 / NCIMB 14063 / MR-1)).